The following is a 285-amino-acid chain: Cytochrome P450 monooxygenase eupD (285 aa).

Positions 1 to 19 (MSIAGLVTTLPWLMNMLRA) are cleaved as a signal peptide. A heme-binding site is contributed by cysteine 229.

This sequence belongs to the cytochrome P450 family. The cofactor is heme.

It participates in secondary metabolite biosynthesis; terpenoid biosynthesis. Cytochrome P450 monooxygenase; part of the gene cluster that mediates the biosynthesis of eupenifeldin, a bistropolone meroterpenoid that acts as an antitumor agent. The first step of eupenifeldin biosynthesis is the biosynthesis of 3-methylorcinaldehyde performed by the non-reducing polyketide synthase eupA. Oxidative dearomatization of 3-methylorcinaldehyde likely catalyzed by the FAD-dependent monooxygenase eupB is followed by oxidative ring expansion by the 2-oxoglutarate-dependent dioxygenase eupC to provide the first tropolone metabolite, tropolone stipitaldehyde. In parallel, generation of sesquiterpene alpha-humulene from farnesylpyrophosphate (FPP) is catalyzed by the terpene cyclase eupE. The cytochrome P450 monooxygenase eupD then hydroxylates humulene to humulenol. The putative Diels-Alderase eupF probably catalyzes the formation of the tropolone-humulene skeleton by linking humulenol and the polyketide moiety. The short-chain dehydrogenase/reductase eupG and the flavin-dependent monooxygenase eupH are also essential for eupenifeldin biosynthesis and are likely the additional decorating enzymes of the tropolone-humulene skeleton to produce final eupenifeldin or derivatives. The polypeptide is Cytochrome P450 monooxygenase eupD (Phoma sp).